The chain runs to 190 residues: Holliday junction branch migration complex subunit RuvA (190 aa).

A domain I region spans residues 1–63 (MLDFIKGKVI…EESIEIYGFL (63 aa)). The segment at 64-139 (ESSERDLFEE…ILPSLQYEKD (76 aa)) is domain II. Position 139 (aspartate 139) is a region of interest, flexible linker. The interval 139-190 (DQKYDDILSALLNLGYKRLEAKEVLDKIYNNEKDEATIIRESLSILAGKDGK) is domain III.

This sequence belongs to the RuvA family. In terms of assembly, homotetramer. Forms an RuvA(8)-RuvB(12)-Holliday junction (HJ) complex. HJ DNA is sandwiched between 2 RuvA tetramers; dsDNA enters through RuvA and exits via RuvB. An RuvB hexamer assembles on each DNA strand where it exits the tetramer. Each RuvB hexamer is contacted by two RuvA subunits (via domain III) on 2 adjacent RuvB subunits; this complex drives branch migration. In the full resolvosome a probable DNA-RuvA(4)-RuvB(12)-RuvC(2) complex forms which resolves the HJ.

The protein localises to the cytoplasm. In terms of biological role, the RuvA-RuvB-RuvC complex processes Holliday junction (HJ) DNA during genetic recombination and DNA repair, while the RuvA-RuvB complex plays an important role in the rescue of blocked DNA replication forks via replication fork reversal (RFR). RuvA specifically binds to HJ cruciform DNA, conferring on it an open structure. The RuvB hexamer acts as an ATP-dependent pump, pulling dsDNA into and through the RuvAB complex. HJ branch migration allows RuvC to scan DNA until it finds its consensus sequence, where it cleaves and resolves the cruciform DNA. The chain is Holliday junction branch migration complex subunit RuvA from Thermodesulfovibrio yellowstonii (strain ATCC 51303 / DSM 11347 / YP87).